Here is an 893-residue protein sequence, read N- to C-terminus: MTSTAPDNSRNRADALPKSWDPSAVEAEMYERWVSAGYFTADPASGKPAYSIVLPPPNVTGTLHMGHALDHTLMDTLARRKRMQGYEVLWLPGMDHAGIATQTVVEKQLAVDGKTKEDFGRELFVEKVWDWKRESGGAIQWQMRALGDGVDWSRDRFTMDEGLSRAVQTMFKRLYDAGLIYRAERLVNWSPELRTAISDIEVKHEDVEGELVSLRYGSLNDDEPHVVVATTRVETMLGDTAVAVHPDDPRYRDLIGTTLEHPITGRQIPIVADDYVDPEFGSGAVKITPAHDPNDFEIGLRHNLPMPTIMDERGRIANTGTEFDGMDRFEARVKVRERLAREGRVVAEKRPYIHSVGHSERTGEPIEPRLSMQWWVKVEALAKAAGDAVRNGQVVIHPASQEPRWFEWVDNMHDWTISRQLWWGHRIPIWYGPDGEVVCLGPGETPPEGWVQDPDVLDTWFSSGLWPFSTMGWPDATPELTKFYPTSVLVTGYDILFFWVARMMMFGMYVAEDPALTAGKDPGQVQVPFKDIFLHGLIRDQHGKKMSKSRGNGIDPLDWIRSYGADALRFTLARGAQPGGDLSVGEPHALASRSFVTKLFNATKFALLNGAAPGELPDRGSLTDADRWILDRLDEVLAEVDAAFDAYEFGKACEALYHFAWDELCDWYLELAKVQFAADGARAESTRTVLGTVLDAVLRLLHPVIPFVTESLWKALTGGESVVVAAWPTASGVTPDADAARRIADAQRLITEIRRFRSDQGLADKQKVSAKLIGVDSAELDALAPAIAALARLTEAGPDFAATASVEVRLSGATVTVELDTSGSVDLEAERKRLEKDLAAAQKELATTEGKLGNEAFLAKAPEQVVDKIRTRRDVAAAEVARIGARLAELGAR.

Residues 57–67 (PNVTGTLHMGH) carry the 'HIGH' region motif. Positions 545–549 (KMSKS) match the 'KMSKS' region motif. Position 548 (lysine 548) interacts with ATP. The stretch at 821–855 (TSGSVDLEAERKRLEKDLAAAQKELATTEGKLGNE) forms a coiled coil.

Belongs to the class-I aminoacyl-tRNA synthetase family. ValS type 1 subfamily. As to quaternary structure, monomer.

It localises to the cytoplasm. The enzyme catalyses tRNA(Val) + L-valine + ATP = L-valyl-tRNA(Val) + AMP + diphosphate. Functionally, catalyzes the attachment of valine to tRNA(Val). As ValRS can inadvertently accommodate and process structurally similar amino acids such as threonine, to avoid such errors, it has a 'posttransfer' editing activity that hydrolyzes mischarged Thr-tRNA(Val) in a tRNA-dependent manner. The chain is Valine--tRNA ligase from Nocardia farcinica (strain IFM 10152).